A 253-amino-acid polypeptide reads, in one-letter code: Phycobilisome rod-core linker polypeptide CpcG4 (253 aa).

In terms of domain architecture, PBS-linker spans 11 to 191 (SSQNHRVTSF…DFQEKAGTVQ (181 aa)).

It belongs to the phycobilisome linker protein family. In terms of assembly, part of the phycobilisome, a hemidiscoidal structure that is composed of two distinct substructures: a core complex and a number of rods radiating from the core.

The protein localises to the cellular thylakoid membrane. Its function is as follows. Rod-core linker protein required for attachment of phycocyanin to allophycocyanin in cores of phycobilisomes. Linker polypeptides determine the state of aggregation and the location of the disk-shaped phycobiliprotein units within the phycobilisome and modulate their spectroscopic properties in order to mediate a directed and optimal energy transfer. This is Phycobilisome rod-core linker polypeptide CpcG4 from Nostoc sp. (strain PCC 7120 / SAG 25.82 / UTEX 2576).